The chain runs to 346 residues: Methionine import ATP-binding protein MetN 1 (346 aa).

Positions 2 to 241 (IEFKQVTKTF…PQHPTTEKFV (240 aa)) constitute an ABC transporter domain. Position 38-45 (38-45 (GFSGAGKS)) interacts with ATP.

The protein belongs to the ABC transporter superfamily. Methionine importer (TC 3.A.1.24) family. The complex is composed of two ATP-binding proteins (MetN), two transmembrane proteins (MetI) and a solute-binding protein (MetQ).

Its subcellular location is the cell membrane. The catalysed reaction is L-methionine(out) + ATP + H2O = L-methionine(in) + ADP + phosphate + H(+). It carries out the reaction D-methionine(out) + ATP + H2O = D-methionine(in) + ADP + phosphate + H(+). In terms of biological role, part of the ABC transporter complex MetNIQ involved in methionine import. Responsible for energy coupling to the transport system. The protein is Methionine import ATP-binding protein MetN 1 of Shouchella clausii (strain KSM-K16) (Alkalihalobacillus clausii).